A 99-amino-acid polypeptide reads, in one-letter code: Protein translation factor SUI1 homolog (99 aa).

It belongs to the SUI1 family.

This is Protein translation factor SUI1 homolog from Pyrococcus horikoshii (strain ATCC 700860 / DSM 12428 / JCM 9974 / NBRC 100139 / OT-3).